Here is a 149-residue protein sequence, read N- to C-terminus: UPF0178 protein Pmen_0294 (149 aa).

This sequence belongs to the UPF0178 family.

This is UPF0178 protein Pmen_0294 from Ectopseudomonas mendocina (strain ymp) (Pseudomonas mendocina).